The sequence spans 135 residues: MAKSTSSAPSQRMLRVGEQVRAAITQVLQRGEVLDPLIENTVISISEVRMSPDLKIATAYVTPLGVADHAAVIEALNKHAKFIRGRLGPQLRQMKYMPDVRFRDDTSFDNYQKIDSLLRSPEVSRDLDRDADDEE.

The protein belongs to the RbfA family. Monomer. Binds 30S ribosomal subunits, but not 50S ribosomal subunits or 70S ribosomes.

Its subcellular location is the cytoplasm. In terms of biological role, one of several proteins that assist in the late maturation steps of the functional core of the 30S ribosomal subunit. Associates with free 30S ribosomal subunits (but not with 30S subunits that are part of 70S ribosomes or polysomes). Required for efficient processing of 16S rRNA. May interact with the 5'-terminal helix region of 16S rRNA. The protein is Ribosome-binding factor A of Rhizobium meliloti (strain 1021) (Ensifer meliloti).